Reading from the N-terminus, the 664-residue chain is Translation factor guf1, mitochondrial (664 aa).

A mitochondrion-targeting transit peptide spans Met-1–Ala-43. The 181-residue stretch at Asp-66 to Val-246 folds into the tr-type G domain. Residues Ala-75 to Ser-82, Asp-139 to His-143, and Asn-193 to Asp-196 each bind GTP.

Belongs to the TRAFAC class translation factor GTPase superfamily. Classic translation factor GTPase family. LepA subfamily.

Its subcellular location is the mitochondrion inner membrane. It carries out the reaction GTP + H2O = GDP + phosphate + H(+). Its function is as follows. Promotes mitochondrial protein synthesis. May act as a fidelity factor of the translation reaction, by catalyzing a one-codon backward translocation of tRNAs on improperly translocated ribosomes. Binds to mitochondrial ribosomes in a GTP-dependent manner. In Aspergillus oryzae (strain ATCC 42149 / RIB 40) (Yellow koji mold), this protein is Translation factor guf1, mitochondrial (guf1).